The chain runs to 467 residues: Venom serine carboxypeptidase (467 aa).

Residues 1 to 18 form the signal peptide; that stretch reads MKKLVLLQFLFFISFARG. N-linked (GlcNAc...) asparagine glycosylation is found at asparagine 130 and asparagine 169. Residue serine 202 is part of the active site. Asparagine 304, asparagine 322, and asparagine 344 each carry an N-linked (GlcNAc...) asparagine glycan. Catalysis depends on residues aspartate 387 and histidine 444.

This sequence belongs to the peptidase S10 family. As to expression, expressed by the venom duct.

It localises to the secreted. It catalyses the reaction Release of a C-terminal amino acid with broad specificity.. The polypeptide is Venom serine carboxypeptidase (Apis mellifera (Honeybee)).